An 81-amino-acid chain; its full sequence is Antimicrobial peptide D1 (81 aa).

A signal peptide spans 1–31 (MAKTVLGIHVTFLTLLFAVLLLNDVMYTPVE). Disulfide bonds link Cys-34/Cys-81, Cys-45/Cys-66, Cys-51/Cys-75, and Cys-55/Cys-77.

Its function is as follows. Antimicrobial peptide probably active against fungi like B.sorokiniana, F.oxysporum, F.graminearum, F.avenaceum, B.cinerea, P.beta, P.infestans and P.debaryanum. The protein is Antimicrobial peptide D1 of Stellaria media (Common chickweed).